We begin with the raw amino-acid sequence, 933 residues long: Protein translocase subunit SecA (933 aa).

Residues glutamine 87, 105–109 (GEGKT), and aspartate 515 contribute to the ATP site. 4 residues coordinate Zn(2+): cysteine 917, cysteine 919, cysteine 928, and histidine 929.

Belongs to the SecA family. As to quaternary structure, monomer and homodimer. Part of the essential Sec protein translocation apparatus which comprises SecA, SecYEG and auxiliary proteins SecDF-YajC and YidC. Requires Zn(2+) as cofactor.

The protein localises to the cell inner membrane. It is found in the cytoplasm. The catalysed reaction is ATP + H2O + cellular proteinSide 1 = ADP + phosphate + cellular proteinSide 2.. Its function is as follows. Part of the Sec protein translocase complex. Interacts with the SecYEG preprotein conducting channel. Has a central role in coupling the hydrolysis of ATP to the transfer of proteins into and across the cell membrane, serving both as a receptor for the preprotein-SecB complex and as an ATP-driven molecular motor driving the stepwise translocation of polypeptide chains across the membrane. The chain is Protein translocase subunit SecA from Burkholderia cenocepacia (strain ATCC BAA-245 / DSM 16553 / LMG 16656 / NCTC 13227 / J2315 / CF5610) (Burkholderia cepacia (strain J2315)).